Here is a 205-residue protein sequence, read N- to C-terminus: Small ribosomal subunit protein uS4c (205 aa).

The interval 16 to 40 is disordered; that stretch reads GKLPSLTNKTSKKRKSPGQPATSFK. One can recognise an S4 RNA-binding domain in the interval 93-161; the sequence is MRLDNIVHRI…IQKNIESKEL (69 aa).

The protein belongs to the universal ribosomal protein uS4 family. In terms of assembly, part of the 30S ribosomal subunit. Contacts protein S5. The interaction surface between S4 and S5 is involved in control of translational fidelity.

It is found in the plastid. Its subcellular location is the chloroplast. In terms of biological role, one of the primary rRNA binding proteins, it binds directly to 16S rRNA where it nucleates assembly of the body of the 30S subunit. Functionally, with S5 and S12 plays an important role in translational accuracy. The chain is Small ribosomal subunit protein uS4c (rps4) from Euglena gracilis.